Reading from the N-terminus, the 178-residue chain is Large ribosomal subunit protein uL16 (178 aa).

The protein belongs to the universal ribosomal protein uL16 family.

This Saccharolobus islandicus (strain Y.N.15.51 / Yellowstone #2) (Sulfolobus islandicus) protein is Large ribosomal subunit protein uL16.